Here is an 819-residue protein sequence, read N- to C-terminus: Ent-beyerene synthase KSL2, chloroplastic (819 aa).

A chloroplast-targeting transit peptide spans 1–58; it reads MLPCLFPAYGSVVACKPSAIDRSPFGLLSQPKQTNRTLIRRPKVTKAFMAIEAMRHCS. The segment covering 58–76 has biased composition (low complexity); the sequence is SSSSSSEEGGAAATTAARS. The interval 58-77 is disordered; the sequence is SSSSSSEEGGAAATTAARSA. Aspartate 567, aspartate 571, asparagine 711, serine 715, and glutamate 719 together coordinate Mg(2+). A DDXXD motif motif is present at residues 567–571; the sequence is DDFFD.

This sequence belongs to the terpene synthase family. It depends on Mg(2+) as a cofactor. As to expression, expressed in roots. Highly expressed in stems, flowers and panicle.

The protein localises to the plastid. It localises to the chloroplast. It carries out the reaction ent-copalyl diphosphate = ent-beyerene + diphosphate. The enzyme catalyses ent-copalyl diphosphate = ent-kaur-16-ene + diphosphate. Its pathway is secondary metabolite biosynthesis; terpenoid biosynthesis. Its function is as follows. Diterpene cyclase involved in jasmonic acid-dependent defense mechanisms in roots by mediating the biosynthesis of labdane-related diterpenoids (LRDs) natural products such as ent-beyerene, an antimicrobial compound. Catalyzes the cyclization of ent-CDP into ent-beyerene as a major and ent-kaurene as a minor product. May be involved in the catalysis of an early step of the gibberellin (GA) biosynthesis pathway. This Oryza sativa subsp. japonica (Rice) protein is Ent-beyerene synthase KSL2, chloroplastic.